We begin with the raw amino-acid sequence, 272 residues long: MNNSEQLIALKESETAFLKYFNKADYELVDFSVVEKLDWKQLNHEDLQQMGERNFWQHEHQIYAIRNDFTDQLLRYYSMYPTAATKVAYTGLIIRNNEAAVQVGLENYAPSLANVQQSLKLFIQFIQQQLRDNVYFVVLGHYQLLDALLDKSLQTPDILSMIEERNLSGLVTYLSTEHPIVQILKENTQQQLNVLEHYIPNDHPALVELKIWERWLHTQGYKDIHLDITAQPPRSYYTGLFIQCHFAENESRVLTGGYYKGSIEGFGLGLTL.

Belongs to the class-II aminoacyl-tRNA synthetase family. HisZ subfamily. In terms of assembly, heteromultimer composed of HisG and HisZ subunits.

It is found in the cytoplasm. The protein operates within amino-acid biosynthesis; L-histidine biosynthesis; L-histidine from 5-phospho-alpha-D-ribose 1-diphosphate: step 1/9. Functionally, required for the first step of histidine biosynthesis. May allow the feedback regulation of ATP phosphoribosyltransferase activity by histidine. The protein is ATP phosphoribosyltransferase regulatory subunit of Staphylococcus aureus (strain bovine RF122 / ET3-1).